The chain runs to 944 residues: Translation initiation factor IF-2 (944 aa).

Low complexity predominate over residues 55–81; that stretch reads LTGQAAAPAAAPSSAPRPGARSSAPKP. The disordered stretch occupies residues 55–329; it reads LTGQAAAPAA…RTKRAEFELR (275 aa). Pro residues predominate over residues 82–92; the sequence is GGRPTPGPQPT. Residues 93-107 are compositionally biased toward low complexity; that stretch reads AAPEVEAPEASDVPV. Residues 123–135 are compositionally biased toward basic and acidic residues; it reads ASRKAAAEEKAQA. Low complexity-rich tracts occupy residues 136–153 and 211–222; these read EKSA…ETPS and GQRPAAGAAGPR. The segment covering 223 to 236 has biased composition (pro residues); that stretch reads PAAPRPGSPRPGAP. Residues 244 to 257 show a composition bias toward low complexity; sequence GARPAGFGQRPAGA. Over residues 258-269 the composition is skewed to gly residues; sequence GRPGGAPGGAGR. Residues 270-283 show a composition bias toward low complexity; the sequence is PGAPAAGGFQRPAG. Residues 284–310 show a composition bias toward gly residues; that stretch reads GFAGRPGGGGRGRGPGGGTAGAFGRGG. The span at 311–322 shows a compositional bias: basic residues; that stretch reads GKSKSRKSKRTK. The region spanning 437-611 is the tr-type G domain; the sequence is IRPPVVTVMG…LTADAGLDLR (175 aa). Positions 446–453 are G1; it reads GHVDHGKT. 446–453 lines the GTP pocket; the sequence is GHVDHGKT. The tract at residues 471–475 is G2; the sequence is GITQH. The segment at 496–499 is G3; sequence DTPG. Residues 496–500 and 550–553 each bind GTP; these read DTPGH and NKVD. A G4 region spans residues 550 to 553; the sequence is NKVD. Positions 586–588 are G5; it reads SAL.

The protein belongs to the TRAFAC class translation factor GTPase superfamily. Classic translation factor GTPase family. IF-2 subfamily.

The protein resides in the cytoplasm. Its function is as follows. One of the essential components for the initiation of protein synthesis. Protects formylmethionyl-tRNA from spontaneous hydrolysis and promotes its binding to the 30S ribosomal subunits. Also involved in the hydrolysis of GTP during the formation of the 70S ribosomal complex. This Clavibacter michiganensis subsp. michiganensis (strain NCPPB 382) protein is Translation initiation factor IF-2.